The primary structure comprises 155 residues: Ribosomal RNA large subunit methyltransferase H (155 aa).

S-adenosyl-L-methionine is bound by residues L72, G103, and 122 to 127; that span reads LSKLTM.

It belongs to the RNA methyltransferase RlmH family. Homodimer.

It localises to the cytoplasm. The catalysed reaction is pseudouridine(1915) in 23S rRNA + S-adenosyl-L-methionine = N(3)-methylpseudouridine(1915) in 23S rRNA + S-adenosyl-L-homocysteine + H(+). Its function is as follows. Specifically methylates the pseudouridine at position 1915 (m3Psi1915) in 23S rRNA. In Methylobacillus flagellatus (strain ATCC 51484 / DSM 6875 / VKM B-1610 / KT), this protein is Ribosomal RNA large subunit methyltransferase H.